Here is a 149-residue protein sequence, read N- to C-terminus: Protein SprT-like (149 aa).

One can recognise a SprT-like domain in the interval 4 to 143 (TDYVKQVSLE…CGLCRGKLLL (140 aa)). Residue H64 coordinates Zn(2+). E65 is an active-site residue. H68 contacts Zn(2+).

This sequence belongs to the SprT family. Zn(2+) is required as a cofactor.

The protein localises to the cytoplasm. The protein is Protein SprT-like of Streptococcus pneumoniae (strain JJA).